The following is a 142-amino-acid chain: Myosin-2 essential light chain (142 aa).

EF-hand domains follow at residues 2–37 and 75–110; these read DDLA…LGQN and HTVE…LGER.

As to quaternary structure, myosin is a hexamer of 2 heavy chains and 4 light chains (two regulatory light chains and two essential light chains).

The protein localises to the cytoplasm. Its subcellular location is the cytoskeleton. Its function is as follows. Required for cytokinesis and embryo elongation. May regulate myosin II complex formation and/or the association of myosin with actin. May be involved in the organization of mlc-4 and nmy-2 into bundles. This is Myosin-2 essential light chain from Caenorhabditis elegans.